We begin with the raw amino-acid sequence, 694 residues long: LMBR1 domain-containing protein 2 homolog (694 aa).

Residues 1-3 (MAY) lie on the Extracellular side of the membrane. A helical membrane pass occupies residues 4–26 (LLSFGIVAALFLASISLYRYGNI). The Cytoplasmic segment spans residues 27 to 30 (PRQH). The chain crosses the membrane as a helical span at residues 31-51 (ILVTLSVLTAWCFSFLIVFTI). At 52–106 (PLDVTSTLYRQCVEEHRPTPAPNVTNTSSATVGPPPQCQEPWGMVPASVFPNLWR) the chain is on the extracellular side. N-linked (GlcNAc...) asparagine glycosylation is found at N74 and N77. A helical transmembrane segment spans residues 107–127 (IIYWSSQFLTWLIMPLMQSYL). At 128 to 144 (KAGDFTVKGKLKSALIE) the chain is on the cytoplasmic side. The helical transmembrane segment at 145–165 (NAIYYGSYLFICGVLLIYIAV) threads the bilayer. The Extracellular segment spans residues 166–181 (KGESLDWQKLKAIASS). The chain crosses the membrane as a helical span at residues 182–202 (ASNTWGLFLLILLLGYALVEV). Topologically, residues 203-381 (PRSLWNNAKP…ECLLKAPFLK (179 aa)) are cytoplasmic. The stretch at 222–249 (KAAKLSTEKAEAEEHVDDILESLQGLSR) forms a coiled coil. A helical transmembrane segment spans residues 382 to 402 (TMCVLTATMSAMVVWSELTFF). The Extracellular portion of the chain corresponds to 403 to 426 (SRHPVLSIFANVIYVAKESYDFFT). Residues 427–447 (IEVFSMVVLCYFFYCTYSTIL) traverse the membrane as a helical segment. The Cytoplasmic segment spans residues 448 to 467 (RIRFLNLYYLAPHHQTNEHS). The chain crosses the membrane as a helical span at residues 468–488 (LIFSGMLLCRLTPPMCLNFLG). Over 489–514 (LIHMDTHIIPNRIMETVYTQIMGHMD) the chain is Extracellular. Residues 515-535 (VIGIISNGFNIYFPMCMLAFC) form a helical membrane-spanning segment. Residues 536–694 (LATWFSLGSR…PPPRGLFDDV (159 aa)) lie on the Cytoplasmic side of the membrane. Residues 564–592 (ELVQEGKDLIAREKRRRQRAEEAMARRRD) are a coiled coil. The disordered stretch occupies residues 673-694 (DYEAETDGRIVGPPPRGLFDDV).

Belongs to the LIMR family.

The protein localises to the membrane. The chain is LMBR1 domain-containing protein 2 homolog from Drosophila melanogaster (Fruit fly).